A 217-amino-acid chain; its full sequence is ATP-dependent Clp protease proteolytic subunit 1 (217 aa).

Residues 1 to 24 (MTPLTTGWHPALSPRAEEGDTPPS) form a disordered region. Ser108 (nucleophile) is an active-site residue. His133 is a catalytic residue.

Belongs to the peptidase S14 family. As to quaternary structure, fourteen ClpP subunits assemble into 2 heptameric rings which stack back to back to give a disk-like structure with a central cavity, resembling the structure of eukaryotic proteasomes.

It is found in the cytoplasm. It catalyses the reaction Hydrolysis of proteins to small peptides in the presence of ATP and magnesium. alpha-casein is the usual test substrate. In the absence of ATP, only oligopeptides shorter than five residues are hydrolyzed (such as succinyl-Leu-Tyr-|-NHMec, and Leu-Tyr-Leu-|-Tyr-Trp, in which cleavage of the -Tyr-|-Leu- and -Tyr-|-Trp bonds also occurs).. Cleaves peptides in various proteins in a process that requires ATP hydrolysis. Has a chymotrypsin-like activity. Plays a major role in the degradation of misfolded proteins. This chain is ATP-dependent Clp protease proteolytic subunit 1, found in Streptomyces avermitilis (strain ATCC 31267 / DSM 46492 / JCM 5070 / NBRC 14893 / NCIMB 12804 / NRRL 8165 / MA-4680).